The primary structure comprises 805 residues: G-type lectin S-receptor-like serine/threonine-protein kinase SD1-29 (805 aa).

A signal peptide spans 1–21 (MGMVLFACLLLLIIFPTCGYA). The Bulb-type lectin domain maps to 22–141 (AINTSSPLSI…VSGNKLWQSF (120 aa)). Residues 22–428 (AINTSSPLSI…SELAGSSRRK (407 aa)) lie on the Extracellular side of the membrane. Residues Asn24, Asn50, Asn85, Asn91, and Asn248 are each glycosylated (N-linked (GlcNAc...) asparagine). An EGF-like domain is found at 277 to 313 (PENPCDLYGRCGPYGLCVRSDPPKCECLKGFVPKSDE). Disulfide bonds link Cys281-Cys293 and Cys287-Cys301. Residues Asn319 and Asn378 are each glycosylated (N-linked (GlcNAc...) asparagine). A PAN domain is found at 332–418 (CQAKSSMKTQ…GEFLFIRLAS (87 aa)). Intrachain disulfides connect Cys371/Cys392 and Cys375/Cys381. Residues 429–449 (IIVGTTVSLSIFLILVFAAIM) traverse the membrane as a helical segment. Topologically, residues 450–805 (LWRYRAKQND…EMTESMIQGR (356 aa)) are cytoplasmic. Residues 488 to 773 (FSPSNKLGQG…DLPVPKQPIF (286 aa)) enclose the Protein kinase domain. ATP contacts are provided by residues 494–502 (LGQGGFGPV) and Lys516. Phosphoserine occurs at positions 522 and 537. Positions 577–594 (CLKFELDWPKRFNIIQGI) are caM-binding. Tyr600 is subject to Phosphotyrosine. The active-site Proton acceptor is Asp613. Phosphoserine occurs at positions 617 and 630. Thr647 carries the post-translational modification Phosphothreonine. Residues Ser690 and Ser793 each carry the phosphoserine modification.

The protein belongs to the protein kinase superfamily. Ser/Thr protein kinase family. In terms of assembly, interacts with PUB9, PUB13, PUB14, PUB29, PUB38, PUB44 and PUB45. Interacts with PBL34, PBL35 and PBL36. Post-translationally, autophosphorylated at Tyr-600. Autophosphorylation at Tyr-600 is required for downstream phosphorylation of the receptor-like cytoplasmic kinase PBL34, PBL35 and PBL36, and activation of plant immunity.

The protein localises to the cell membrane. It catalyses the reaction L-seryl-[protein] + ATP = O-phospho-L-seryl-[protein] + ADP + H(+). It carries out the reaction L-threonyl-[protein] + ATP = O-phospho-L-threonyl-[protein] + ADP + H(+). The enzyme catalyses L-tyrosyl-[protein] + ATP = O-phospho-L-tyrosyl-[protein] + ADP + H(+). S-domain receptor protein kinase involved in lipopolysaccharide (LPS) sensing. Specifically detects LPS of Pseudomonas and Xanthomonas species. LPS are major components of the outer membrane of Gram-negative bacteria and are important microbe-associated molecular patterns (MAMPs) that trigger biphasic production of reactive oxygen species (ROS) and immune responses in plants. Seems to be only partially associated with the second LPS-triggered ROS burst. Mediates defense signaling in response to the medium-chain 3-hydroxy fatty acid 3-OH-C10:0, a pathogen-associated molecular pattern (PAMP) which induces autophosphorylation at Tyr-600. Autophosphorylation at Tyr-600 is required for downstream phosphorylation of the receptor-like cytoplasmic kinase PBL34, PBL35 and PBL36, and activation of plant immunity. Functionally, (Microbial infection) Targeted by the bacterial type III effector protein tyrosine phosphatase HopAO1 from Pseudomonas syringae. HopAO1 dephosphorylates Tyr-600, which suppresses the immune response. The polypeptide is G-type lectin S-receptor-like serine/threonine-protein kinase SD1-29 (Arabidopsis thaliana (Mouse-ear cress)).